Consider the following 257-residue polypeptide: tRNA pseudouridine synthase A (257 aa).

The active-site Nucleophile is Asp57. Substrate is bound at residue Tyr115.

The protein belongs to the tRNA pseudouridine synthase TruA family. As to quaternary structure, homodimer.

It catalyses the reaction uridine(38/39/40) in tRNA = pseudouridine(38/39/40) in tRNA. In terms of biological role, formation of pseudouridine at positions 38, 39 and 40 in the anticodon stem and loop of transfer RNAs. The sequence is that of tRNA pseudouridine synthase A from Lawsonia intracellularis (strain PHE/MN1-00).